A 266-amino-acid chain; its full sequence is Non-structural maintenance of chromosomes element 1 homolog (266 aa).

An interaction with NSMCE3 region spans residues 1-102 (MQGNTRRTGV…SVSKMASDFA (102 aa)). The segment at 191–232 (CNICRSLLIQGQSCETCGIRMHLPCVAKYFQSSSEPHCPHCN) adopts an RING-type; atypical zinc-finger fold. Residues 243–252 (FDPEKERETG) are compositionally biased toward basic and acidic residues. The tract at residues 243-266 (FDPEKERETGMSRSNKRPSRSRQH) is disordered. Residues 256-266 (SNKRPSRSRQH) show a composition bias toward basic residues.

This sequence belongs to the NSE1 family. As to quaternary structure, component of the SMC5-SMC6 complex which consists at least of SMC5, SMC6, NSMCE2, NSMCE1, NSMCE4A or EID3 and NSMCE3. NSMCE1, NSMCE4A or EID3 and NSMCE3 probably form a subcomplex that bridges the head domains of the SMC5-SMC6 heterodimer. Interacts with NSMCE3. In terms of processing, ubiquitinated.

The protein resides in the nucleus. Its subcellular location is the chromosome. It localises to the telomere. The enzyme catalyses S-ubiquitinyl-[E2 ubiquitin-conjugating enzyme]-L-cysteine + [acceptor protein]-L-lysine = [E2 ubiquitin-conjugating enzyme]-L-cysteine + N(6)-ubiquitinyl-[acceptor protein]-L-lysine.. RING-type zinc finger-containing E3 ubiquitin ligase that assembles with melanoma antigen protein (MAGE) to catalyze the direct transfer of ubiquitin from E2 ubiquitin-conjugating enzyme to a specific substrate. Within MAGE-RING ubiquitin ligase complex, MAGE stimulates and specifies ubiquitin ligase activity likely through recruitment and/or stabilization of the E2 ubiquitin-conjugating enzyme at the E3:substrate complex. Involved in maintenance of genome integrity, DNA damage response and DNA repair. NSMCE3/MAGEG1 and NSMCE1 ubiquitin ligase are components of SMC5-SMC6 complex and may positively regulate homologous recombination-mediated DNA repair. The polypeptide is Non-structural maintenance of chromosomes element 1 homolog (NSMCE1) (Bos taurus (Bovine)).